Here is a 97-residue protein sequence, read N- to C-terminus: Large ribosomal subunit protein eL21 (97 aa).

This sequence belongs to the eukaryotic ribosomal protein eL21 family.

This is Large ribosomal subunit protein eL21 from Methanospirillum hungatei JF-1 (strain ATCC 27890 / DSM 864 / NBRC 100397 / JF-1).